Consider the following 178-residue polypeptide: ATP-dependent protease subunit HslV (178 aa).

Threonine 8 is an active-site residue. Glycine 163, cysteine 166, and threonine 169 together coordinate Na(+).

It belongs to the peptidase T1B family. HslV subfamily. As to quaternary structure, a double ring-shaped homohexamer of HslV is capped on each side by a ring-shaped HslU homohexamer. The assembly of the HslU/HslV complex is dependent on binding of ATP.

Its subcellular location is the cytoplasm. It carries out the reaction ATP-dependent cleavage of peptide bonds with broad specificity.. Allosterically activated by HslU binding. In terms of biological role, protease subunit of a proteasome-like degradation complex believed to be a general protein degrading machinery. In Xylella fastidiosa (strain 9a5c), this protein is ATP-dependent protease subunit HslV.